The chain runs to 467 residues: ATP synthase subunit beta (467 aa).

Position 153-160 (153-160 (GGAGVGKT)) interacts with ATP.

It belongs to the ATPase alpha/beta chains family. In terms of assembly, F-type ATPases have 2 components, CF(1) - the catalytic core - and CF(0) - the membrane proton channel. CF(1) has five subunits: alpha(3), beta(3), gamma(1), delta(1), epsilon(1). CF(0) has three main subunits: a(1), b(2) and c(9-12). The alpha and beta chains form an alternating ring which encloses part of the gamma chain. CF(1) is attached to CF(0) by a central stalk formed by the gamma and epsilon chains, while a peripheral stalk is formed by the delta and b chains.

It localises to the cell membrane. The enzyme catalyses ATP + H2O + 4 H(+)(in) = ADP + phosphate + 5 H(+)(out). Its function is as follows. Produces ATP from ADP in the presence of a proton gradient across the membrane. The catalytic sites are hosted primarily by the beta subunits. In Lactiplantibacillus plantarum (strain ATCC BAA-793 / NCIMB 8826 / WCFS1) (Lactobacillus plantarum), this protein is ATP synthase subunit beta.